We begin with the raw amino-acid sequence, 192 residues long: Cytochrome c oxidase assembly factor 8 (192 aa).

The N-terminal 26 residues, 1–26 (MAALRPGSRALRRLLCRSFSGGGGVR), are a transit peptide targeting the mitochondrion.

It belongs to the COA8 family. N-terminal mitochondrial targeting sequence is cleaved from the mature protein once in the mitochondrion. In terms of processing, in normal conditions, the cytoplasmic precursor protein is rapidly degraded by the ubiquitination-proteasome system (UPS). Oxidative stress induces protein stabilization and import into mitochondria where it protects COX from degradation. As to expression, expressed in atherosclerotic smooth muscle cells (at protein level). Expressed in aorta, brain, heart, kidney, liver, lung and spleen. Isoform 1 is strongly expressed in Kidney. Isoform 2 is strongly expressed in brain.

It is found in the mitochondrion inner membrane. In terms of biological role, required for cytochrome c complex (COX) IV assembly and function Protects COX assembly from oxidation-induced degradation, COX being the terminal component of the mitochondrial respiratory chain. The sequence is that of Cytochrome c oxidase assembly factor 8 (Coa8) from Mus musculus (Mouse).